A 986-amino-acid polypeptide reads, in one-letter code: P3N-PIPO polyprotein (986 aa).

Residues 141-284 form the Peptidase S30 domain; it reads KLTEGQMNHL…QGVMDSMVQF (144 aa). Catalysis depends on for P1 proteinase activity residues His-192, Asp-201, and Ser-235. An Involved in interaction with stylet and aphid transmission motif is present at residues 334 to 337; the sequence is KITC. The short motif at 592–594 is the Involved in virions binding and aphid transmission element; the sequence is PTK. The Peptidase C6 domain occupies 618–740; sequence LYIARQGFCY…ESDIKHYRVG (123 aa). Active-site for helper component proteinase activity residues include Cys-626 and His-699.

Belongs to the potyviridae P3N-PIPO polyprotein family. In terms of assembly, interacts (via PIPO domain) with host PCaP1 protein; this interaction may help to anchor the movement complex to the plasma membrane from which the complex could move to the plasmodesmata. Post-translationally, potyviral RNA is expressed as two polyproteins which undergo post-translational proteolytic processing. Genome polyprotein is processed by NIa-pro, P1 and HC-pro proteinases resulting in the production of at least ten individual proteins. P3N-PIPO is cleaved by P1 and HC-pro proteinases resulting in the production of three individual proteins. The P1 proteinase and the HC-pro cleave only their respective C-termini autocatalytically.

Its subcellular location is the host cell junction. The protein resides in the host plasmodesma. The catalysed reaction is Hydrolyzes a Gly-|-Gly bond at its own C-terminus, commonly in the sequence -Tyr-Xaa-Val-Gly-|-Gly, in the processing of the potyviral polyprotein.. Functionally, required for aphid transmission and also has proteolytic activity. Only cleaves a Gly-Gly dipeptide at its own C-terminus. Interacts with virions and aphid stylets. Acts as a suppressor of RNA-mediated gene silencing, also known as post-transcriptional gene silencing (PTGS), a mechanism of plant viral defense that limits the accumulation of viral RNAs. May have RNA-binding activity. Its function is as follows. Allows efficient cell to cell propagation, by bypassing the host cell wall barrier. Transports viral genome to neighboring plant cells directly through plasmosdesmata, without any budding. The polypeptide is P3N-PIPO polyprotein (Capsicum (peppers)).